We begin with the raw amino-acid sequence, 226 residues long: LysM and putative peptidoglycan-binding domain-containing protein 1 (226 aa).

Residues Ser23 and Ser33 each carry the phosphoserine modification. A LysM domain is found at 40-84 (LEHQLEPGDTLAGLALKYGVTMEQIKRTNRLYTNDSIFLKKTLYI). Residues 95 to 156 (NGLDSEEEND…PSHDLSASDF (62 aa)) are disordered. Residues 98–107 (DSEEENDGEE) are compositionally biased toward acidic residues. The residue at position 99 (Ser99) is a Phosphoserine. The segment covering 142-151 (QETSTPSHDL) has biased composition (polar residues). A phosphoserine mark is found at Ser165, Ser180, Ser193, and Ser211. The tract at residues 170–226 (AAAQKLRKGESGVPEEDTGLYPSSPRMQQRAVLGPVPLTRTSRTQTLRDQEDEIFKL) is disordered. The segment covering 215 to 226 (TLRDQEDEIFKL) has biased composition (basic and acidic residues).

The polypeptide is LysM and putative peptidoglycan-binding domain-containing protein 1 (Lysmd1) (Mus musculus (Mouse)).